The chain runs to 265 residues: Glycine/sarcosine N-methyltransferase (265 aa).

S-adenosyl-L-methionine is bound by residues tyrosine 28, tryptophan 36, arginine 45, alanine 69, aspartate 90, 116 to 117 (DW), and leucine 134. Positions 136, 169, and 208 each coordinate substrate.

This sequence belongs to the class I-like SAM-binding methyltransferase superfamily. Glycine N-methyltransferase family. In terms of assembly, monomer.

The enzyme catalyses glycine + 2 S-adenosyl-L-methionine = N,N-dimethylglycine + 2 S-adenosyl-L-homocysteine + 2 H(+). It carries out the reaction glycine + S-adenosyl-L-methionine = sarcosine + S-adenosyl-L-homocysteine + H(+). The catalysed reaction is sarcosine + S-adenosyl-L-methionine = N,N-dimethylglycine + S-adenosyl-L-homocysteine + H(+). The protein operates within amine and polyamine biosynthesis; betaine biosynthesis via glycine pathway; betaine from glycine: step 1/3. It functions in the pathway amine and polyamine biosynthesis; betaine biosynthesis via glycine pathway; betaine from glycine: step 2/3. Its activity is regulated as follows. Inhibited by acetate, dimethylglycine and S-adenosyl-L-homocysteine. Its function is as follows. Catalyzes the methylation of glycine and sarcosine to sarcosine and dimethylglycine, respectively, with S-adenosylmethionine (AdoMet) acting as the methyl donor. This Aphanothece halophytica protein is Glycine/sarcosine N-methyltransferase.